A 443-amino-acid chain; its full sequence is 3-isopropylmalate dehydratase large subunit (443 aa).

[4Fe-4S] cluster-binding residues include Cys-347, Cys-407, and Cys-410.

This sequence belongs to the aconitase/IPM isomerase family. LeuC type 1 subfamily. In terms of assembly, heterodimer of LeuC and LeuD. Requires [4Fe-4S] cluster as cofactor.

It carries out the reaction (2R,3S)-3-isopropylmalate = (2S)-2-isopropylmalate. It functions in the pathway amino-acid biosynthesis; L-leucine biosynthesis; L-leucine from 3-methyl-2-oxobutanoate: step 2/4. Functionally, catalyzes the isomerization between 2-isopropylmalate and 3-isopropylmalate, via the formation of 2-isopropylmaleate. This chain is 3-isopropylmalate dehydratase large subunit, found in Buchnera aphidicola subsp. Uroleucon obscurum.